Here is a 122-residue protein sequence, read N- to C-terminus: Large ribosomal subunit protein uL14 (122 aa).

It belongs to the universal ribosomal protein uL14 family. As to quaternary structure, part of the 50S ribosomal subunit. Forms a cluster with proteins L3 and L19. In the 70S ribosome, L14 and L19 interact and together make contacts with the 16S rRNA in bridges B5 and B8.

Functionally, binds to 23S rRNA. Forms part of two intersubunit bridges in the 70S ribosome. The chain is Large ribosomal subunit protein uL14 from Bacillus pumilus (strain SAFR-032).